Consider the following 272-residue polypeptide: Indole-3-glycerol phosphate synthase (272 aa).

The protein belongs to the TrpC family.

It catalyses the reaction 1-(2-carboxyphenylamino)-1-deoxy-D-ribulose 5-phosphate + H(+) = (1S,2R)-1-C-(indol-3-yl)glycerol 3-phosphate + CO2 + H2O. It functions in the pathway amino-acid biosynthesis; L-tryptophan biosynthesis; L-tryptophan from chorismate: step 4/5. The chain is Indole-3-glycerol phosphate synthase from Paenarthrobacter aurescens (strain TC1).